Reading from the N-terminus, the 765-residue chain is Amyloid beta precursor like protein 2 (765 aa).

The signal sequence occupies residues 1-31 (MAATGTAAAAATGKLLVLLLLGLTAPAAALA). The Extracellular segment spans residues 32-695 (GYIEALAANA…LREDFSLSSS (664 aa)). Positions 46–139 (AVAEPQIAMF…PFKCLVGEFV (94 aa)) are GFLD subdomain. Residues 46-205 (AVAEPQIAMF…HGTEYVCCPQ (160 aa)) enclose the E1 domain. 6 disulfides stabilise this stretch: cysteine 56–cysteine 80, cysteine 91–cysteine 133, cysteine 116–cysteine 123, cysteine 149–cysteine 203, cysteine 160–cysteine 190, and cysteine 174–cysteine 202. The cuBD subdomain stretch occupies residues 147-205 (ENCQFFHQERMEVCEKHQRWHTVVKEACLTEGMTLYSYGMLLPCGVDQFHGTEYVCCPQ). Cu cation contacts are provided by histidine 163, histidine 167, and tyrosine 184. The interval 211-301 (SDSTMSKEEE…EPSSDGTISD (91 aa)) is disordered. Serine 216 carries the post-translational modification Phosphoserine. Composition is skewed to acidic residues over residues 218–231 (EEEE…EEDY) and 240–271 (TEAD…EVVE). Over residues 272–284 (DRDYYYDSFKGDD) the composition is skewed to basic and acidic residues. The BPTI/Kunitz inhibitor domain occupies 308-366 (VKAVCSQEAMTGPCRAVMPRWYFDLSKGKCVRFIYGGCGGNRNNFESEDYCMAVCKTMI). 3 disulfide bridges follow: cysteine 312/cysteine 362, cysteine 321/cysteine 345, and cysteine 337/cysteine 358. The E2 domain occupies 375 to 566 (DVDVYFETSA…QEIQEEIDEL (192 aa)). Position 592 is a phosphoserine (serine 592). The interval 597 to 616 (EIPPFHPFHPFPSLSENEDT) is disordered. Serine 628 carries O-linked (Xyl...) (chondroitin sulfate) serine glycosylation. A helical membrane pass occupies residues 696–718 (ALIGLLVIAVAIATVIVISLVML). Topologically, residues 719-765 (RKRQYGTISHGIVEVHPMLTPEERHLNKMQNHGYENPTYKYLEQMQI) are cytoplasmic. Residues 751 to 765 (GYENPTYKYLEQMQI) form an interaction with DAB2 region. Residues 752-757 (YENPTY) carry the NPXY motif motif.

It belongs to the APP family. In terms of assembly, interacts with CPEB1. Interacts (via NPXY motif) with DAB2 (via PID domain); the interaction is impaired by tyrosine phosphorylation of the NPXY motif. Interacts (via cytoplasmic domain) with APBB2/FE65L. Interacts (via intracellular domain) with APBB3/FE65L2.

Its subcellular location is the membrane. Functionally, may play a role in the regulation of hemostasis. The soluble form may have inhibitory properties towards coagulation factors. May interact with cellular G-protein signaling pathways. May bind to the DNA 5'-GTCACATG-3'(CDEI box). Inhibits trypsin, chymotrypsin, plasmin, factor XIA and plasma and glandular kallikrein. Modulates the Cu/Zn nitric oxide-catalyzed autodegradation of GPC1 heparan sulfate side chains in fibroblasts. In Rattus norvegicus (Rat), this protein is Amyloid beta precursor like protein 2.